A 128-amino-acid polypeptide reads, in one-letter code: Aspartate 1-decarboxylase (128 aa).

Residue Ser-25 is the Schiff-base intermediate with substrate; via pyruvic acid of the active site. At Ser-25 the chain carries Pyruvic acid (Ser). Position 57 (Thr-57) interacts with substrate. The active-site Proton donor is Tyr-58. 73–75 (GAA) lines the substrate pocket.

It belongs to the PanD family. As to quaternary structure, heterooctamer of four alpha and four beta subunits. Pyruvate serves as cofactor. Post-translationally, is synthesized initially as an inactive proenzyme, which is activated by self-cleavage at a specific serine bond to produce a beta-subunit with a hydroxyl group at its C-terminus and an alpha-subunit with a pyruvoyl group at its N-terminus.

It is found in the cytoplasm. It carries out the reaction L-aspartate + H(+) = beta-alanine + CO2. It participates in cofactor biosynthesis; (R)-pantothenate biosynthesis; beta-alanine from L-aspartate: step 1/1. Catalyzes the pyruvoyl-dependent decarboxylation of aspartate to produce beta-alanine. The sequence is that of Aspartate 1-decarboxylase from Caldicellulosiruptor saccharolyticus (strain ATCC 43494 / DSM 8903 / Tp8T 6331).